The following is a 301-amino-acid chain: tRNA dimethylallyltransferase (301 aa).

Residue 12-19 coordinates ATP; sequence GPTASGKT. 14–19 is a binding site for substrate; it reads TASGKT. Residues 37 to 40 form an interaction with substrate tRNA region; that stretch reads DSLS.

It belongs to the IPP transferase family. As to quaternary structure, monomer. It depends on Mg(2+) as a cofactor.

The catalysed reaction is adenosine(37) in tRNA + dimethylallyl diphosphate = N(6)-dimethylallyladenosine(37) in tRNA + diphosphate. In terms of biological role, catalyzes the transfer of a dimethylallyl group onto the adenine at position 37 in tRNAs that read codons beginning with uridine, leading to the formation of N6-(dimethylallyl)adenosine (i(6)A). The chain is tRNA dimethylallyltransferase from Sulfurovum sp. (strain NBC37-1).